The primary structure comprises 301 residues: L-threonate dehydrogenase (301 aa).

Residues 6–34 (YSVAVIGLGSMGMGAAVSCINAGLTTYGI) and Thr101 each bind NAD(+). The active site involves Lys177. NAD(+) is bound at residue Lys245.

This sequence belongs to the HIBADH-related family. L-threonate dehydrogenase subfamily.

It carries out the reaction L-threonate + NAD(+) = 2-dehydro-L-erythronate + NADH + H(+). In terms of biological role, catalyzes oxidation of L-threonate to 2-oxo-tetronate. Can use either NAD(+) or NADP(+) as cosubstrate, with a preference for NAD(+). The sequence is that of L-threonate dehydrogenase from Haemophilus influenzae (strain ATCC 51907 / DSM 11121 / KW20 / Rd).